The sequence spans 155 residues: Small ribosomal subunit protein uS7c (155 aa).

It belongs to the universal ribosomal protein uS7 family. As to quaternary structure, part of the 30S ribosomal subunit.

The protein localises to the plastid. It is found in the chloroplast. Its function is as follows. One of the primary rRNA binding proteins, it binds directly to 16S rRNA where it nucleates assembly of the head domain of the 30S subunit. The polypeptide is Small ribosomal subunit protein uS7c (rps7) (Stewartia pseudocamellia (Japanese stewartia)).